The following is a 275-amino-acid chain: Bis(5'-nucleosyl)-tetraphosphatase, symmetrical (275 aa).

It belongs to the Ap4A hydrolase family.

The catalysed reaction is P(1),P(4)-bis(5'-adenosyl) tetraphosphate + H2O = 2 ADP + 2 H(+). Functionally, hydrolyzes diadenosine 5',5'''-P1,P4-tetraphosphate to yield ADP. The chain is Bis(5'-nucleosyl)-tetraphosphatase, symmetrical from Actinobacillus succinogenes (strain ATCC 55618 / DSM 22257 / CCUG 43843 / 130Z).